The following is an 884-amino-acid chain: Telomerase reverse transcriptase (884 aa).

The Reverse transcriptase domain occupies 422–725; the sequence is CRNHNSYTLS…TVIQFCAMHI (304 aa). The Mg(2+) site is built by D530, D670, and D671.

Belongs to the reverse transcriptase family. Telomerase subfamily. As to quaternary structure, catalytic subunit of the telomerase holoenzyme complex composed minimally of EST2 and the telomerase RNA template component.

The protein resides in the nucleus. It is found in the chromosome. Its subcellular location is the telomere. It catalyses the reaction DNA(n) + a 2'-deoxyribonucleoside 5'-triphosphate = DNA(n+1) + diphosphate. In terms of biological role, telomerase is a ribonucleoprotein enzyme essential for the replication of chromosome termini in most eukaryotes. It elongates telomeres. It is a reverse transcriptase that adds simple sequence repeats to chromosome ends by copying a template sequence within the RNA component of the enzyme. The protein is Telomerase reverse transcriptase (EST2) of Saccharomyces cerevisiae (strain ATCC 204508 / S288c) (Baker's yeast).